A 726-amino-acid chain; its full sequence is NHL repeat-containing protein 2 (726 aa).

The Thioredoxin domain maps to 43–200 (QKVDGWEQDL…TSIALKYYKD (158 aa)). NHL repeat units lie at residues 212-254 (KLYK…VWKN), 265-307 (NPGR…IDLE), 335-369 (ISSP…IWAL), 409-439 (FAQP…VRTV), 461-505 (AFGD…VDPK), and 518-562 (TNNV…MDLE).

Monomer. Ubiquitous. Detected in heart, kidney, muscle, brain, lung, liver and in skin fibroblasts (at protein level).

It localises to the cytoplasm. It is found in the cytosol. In terms of biological role, required for normal embryonic development. The sequence is that of NHL repeat-containing protein 2 (NHLRC2) from Homo sapiens (Human).